The primary structure comprises 400 residues: Elongation factor Tu (400 aa).

One can recognise a tr-type G domain in the interval 10–209 (KPHVNIGTIG…NVDAYIPTPE (200 aa)). Positions 19–26 (GHVDHGKT) are G1. 19–26 (GHVDHGKT) contacts GTP. Residue threonine 26 coordinates Mg(2+). Residues 60-64 (GITIN) form a G2 region. The interval 81–84 (DCPG) is G3. GTP is bound by residues 81 to 85 (DCPGH) and 136 to 139 (NKSD). The tract at residues 136–139 (NKSD) is G4. The segment at 174–176 (SGL) is G5.

Belongs to the TRAFAC class translation factor GTPase superfamily. Classic translation factor GTPase family. EF-Tu/EF-1A subfamily. As to quaternary structure, monomer.

The protein localises to the cytoplasm. The enzyme catalyses GTP + H2O = GDP + phosphate + H(+). Functionally, GTP hydrolase that promotes the GTP-dependent binding of aminoacyl-tRNA to the A-site of ribosomes during protein biosynthesis. In Desulforamulus reducens (strain ATCC BAA-1160 / DSM 100696 / MI-1) (Desulfotomaculum reducens), this protein is Elongation factor Tu.